The chain runs to 561 residues: Putative transport protein YbjL (561 aa).

5 consecutive transmembrane segments (helical) span residues 8 to 28, 32 to 52, 66 to 86, 94 to 114, and 158 to 178; these read LLNG…LCLG, LGSI…LLGQ, FMLF…SIFF, MLAL…GKLF, and NLSL…IVGA. RCK C-terminal domains are found at residues 202-288 and 292-373; these read LDTD…SFRN and VFDR…RIGF. A run of 5 helical transmembrane segments spans residues 383–403, 406–426, 451–471, 475–495, and 540–560; these read LLAF…TFQF, FSFG…LGFM, VFMA…LGAI, MLVA…LFGA, and AIAN…WPGL.

It belongs to the AAE transporter (TC 2.A.81) family. YbjL subfamily.

It is found in the cell membrane. In Escherichia fergusonii (strain ATCC 35469 / DSM 13698 / CCUG 18766 / IAM 14443 / JCM 21226 / LMG 7866 / NBRC 102419 / NCTC 12128 / CDC 0568-73), this protein is Putative transport protein YbjL.